The chain runs to 395 residues: Imidazolonepropionase (395 aa).

The Fe(3+) site is built by His-63 and His-65. The Zn(2+) site is built by His-63 and His-65. Residues Arg-72, Tyr-135, and His-168 each coordinate 4-imidazolone-5-propanoate. Tyr-135 provides a ligand contact to N-formimidoyl-L-glutamate. His-233 serves as a coordination point for Fe(3+). Zn(2+) is bound at residue His-233. Residue Gln-236 coordinates 4-imidazolone-5-propanoate. Asp-308 lines the Fe(3+) pocket. Asp-308 is a binding site for Zn(2+). Residues Asn-310 and Gly-312 each coordinate N-formimidoyl-L-glutamate. Thr-313 serves as a coordination point for 4-imidazolone-5-propanoate.

It belongs to the metallo-dependent hydrolases superfamily. HutI family. It depends on Zn(2+) as a cofactor. Fe(3+) serves as cofactor.

It is found in the cytoplasm. It catalyses the reaction 4-imidazolone-5-propanoate + H2O = N-formimidoyl-L-glutamate. Its pathway is amino-acid degradation; L-histidine degradation into L-glutamate; N-formimidoyl-L-glutamate from L-histidine: step 3/3. Its function is as follows. Catalyzes the hydrolytic cleavage of the carbon-nitrogen bond in imidazolone-5-propanoate to yield N-formimidoyl-L-glutamate. It is the third step in the universal histidine degradation pathway. In Cereibacter sphaeroides (strain ATCC 17029 / ATH 2.4.9) (Rhodobacter sphaeroides), this protein is Imidazolonepropionase.